Reading from the N-terminus, the 410-residue chain is 2-hydroxy-5-methyl-1-naphthoate 7-hydroxylase (410 aa).

C350 serves as a coordination point for heme.

This sequence belongs to the cytochrome P450 family. Heme is required as a cofactor.

The catalysed reaction is 2-hydroxy-5-methyl-1-naphthoate + 2 reduced [2Fe-2S]-[ferredoxin] + O2 + 2 H(+) = 2,7-dihydroxy-5-methyl-1-naphthoate + 2 oxidized [2Fe-2S]-[ferredoxin] + H2O. It participates in antibiotic biosynthesis. Functionally, involved in the biosynthesis of the naphthoic acid (NA) moiety in the chromophore of the enedyine antitumor antibiotic neocarzinostatin (NCS). Catalyzes the hydroxylation at C-7 position of 2-hydroxy-5-methyl-1-naphthoate to yield 2,7-dihydroxy-5-methyl-1-naphthoate. The protein is 2-hydroxy-5-methyl-1-naphthoate 7-hydroxylase of Streptomyces carzinostaticus.